The following is a 3014-amino-acid chain: Genome polyprotein (3014 aa).

An N-acetylserine; by host modification is found at Ser-2. The interval 2–23 is interaction with STAT1; the sequence is STNPKPQRKTKRNTNRRPQDVK. The interaction with EIF2AK2/PKR stretch occupies residues 2–58; that stretch reads STNPKPQRKTKRNTNRRPQDVKFPGGGQIVGGVYLLPRRGPKLGVRATRKNSERSQP. The tract at residues 2 to 59 is interaction with DDX3X; sequence STNPKPQRKTKRNTNRRPQDVKFPGGGQIVGGVYLLPRRGPKLGVRATRKNSERSQPR. The interval 2–75 is disordered; the sequence is STNPKPQRKT…PKARRPTGRS (74 aa). At 2 to 168 the chain is on the cytoplasmic side; the sequence is STNPKPQRKT…EDGINYATGN (167 aa). Short sequence motifs (nuclear localization signal) lie at residues 5–13 and 38–43; these read PKPQRKTKR and PRRGPK. The segment covering 7 to 16 has biased composition (basic residues); the sequence is PQRKTKRNTN. Position 53 is a phosphoserine; by host (Ser-53). 2 consecutive short sequence motifs (nuclear localization signal) follow at residues 58-64 and 66-71; these read PRGRRQP and PKARRP. Residues 58–72 are compositionally biased toward basic residues; sequence PRGRRQPIPKARRPT. Residues Ser-99 and Ser-116 each carry the phosphoserine; by host modification. Residues 112–152 are important for endoplasmic reticulum and mitochondrial localization; it reads PRRKSPNLGRVIHTLTCGFPHLMGYIPLVGGPVGGVSRALA. Positions 122 to 173 are interaction with APOA2; it reads VIHTLTCGFPHLMGYIPLVGGPVGGVSRALAHGVKVLEDGINYATGNLPGCP. Residues 164–167 form an important for lipid droplets localization region; that stretch reads YATG. A helical membrane pass occupies residues 169 to 189; that stretch reads LPGCPFSIFVLALLWCLTVPA. A propeptide spans 178 to 191 (ER anchor for the core protein, removed in mature form by host signal peptidase); the sequence is VLALLWCLTVPASA. Residues 190 to 358 are Lumenal-facing; sequence SAVPYRNASG…AGGHWGVLLA (169 aa). N-linked (GlcNAc...) asparagine; by host glycans are attached at residues Asn-196, Asn-209, and Asn-234. Residues 265–296 form an important for fusion region; sequence LAGGAAFCSALYVGDACGALSLVGQMFTYKPR. The N-linked (GlcNAc...) asparagine; by host glycan is linked to Asn-305. The chain crosses the membrane as a helical span at residues 359–379; it reads AAYFASTANWAKVILVLFLFA. Topologically, residues 380-726 are lumenal; that stretch reads GVDGRTHTVG…WEYIMLVFLL (347 aa). Residues 385 to 412 are HVR1; that stretch reads THTVGGTVGQGLKSLTSFFNPGPQRQLQ. Asn-417, Asn-423, and Asn-430 each carry an N-linked (GlcNAc...) (high mannose) asparagine; by host glycan. 4 disulfide bridges follow: Cys-429-Cys-553, Cys-452-Cys-459, Cys-487-Cys-495, and Cys-504-Cys-509. An N-linked (GlcNAc...) asparagine; by host glycan is attached at Asn-448. The interval 475 to 479 is HVR2; sequence ATISG. The tract at residues 481-494 is CD81-binding 1; that stretch reads SDDKPYCWHYPPRP. Asn-533 carries N-linked (GlcNAc...) asparagine; by host glycosylation. The interval 545–552 is CD81-binding 2; it reads PPAGNWFG. Asn-557 carries an N-linked (GlcNAc...) asparagine; by host glycan. A disulfide bond links Cys-565 and Cys-570. Asn-578 carries an N-linked (GlcNAc...) asparagine; by host glycan. Disulfide bonds link Cys-582/Cys-586, Cys-598/Cys-621, and Cys-608/Cys-645. Asn-624 and Asn-646 each carry an N-linked (GlcNAc...) (high mannose) asparagine; by host glycan. A disulfide bond links Cys-653 and Cys-678. The tract at residues 661–672 is PKR/eIF2-alpha phosphorylation homology domain (PePHD); that stretch reads AELSPLLHTTTQ. The chain crosses the membrane as a helical span at residues 727-747; that stretch reads LADARICTCLLILLLICQAEA. Over 748–758 the chain is Lumenal; it reads TCKNVIVLNAA. Residues 759-779 traverse the membrane as a helical segment; the sequence is AAAGNHGFFWGLLVVCLAWHV. The Cytoplasmic segment spans residues 780-783; it reads KGRL. The chain crosses the membrane as a helical span at residues 784 to 804; the sequence is VPGATYLCLGVWPLLLVRLLR. At 805–814 the chain is on the lumenal side; it reads PHRALALDSS. Residues 815–835 traverse the membrane as a helical segment; it reads DGGTVGCLVLIVLTIFTLTPG. At 836–882 the chain is on the cytoplasmic side; sequence YKKKVVLVMWWLQYFIARVEAIIHVWVPPLQVKGGRDAVIMLTCLFH. The helical transmembrane segment at 883-903 threads the bilayer; sequence PALGFEITKILFGILGPLYLL. The Lumenal segment spans residues 904 to 929; sequence QHSLTKVPYFLRARALLRLCLLAKHL. The Peptidase C18 domain maps to 904-1027; the sequence is QHSLTKVPYF…DIKTSGWRLL (124 aa). Residues 905 to 1207 form a protease NS2-3 region; that stretch reads HSLTKVPYFL…PVENLETTMR (303 aa). Cys-923 carries S-palmitoyl cysteine; by host lipidation. The chain crosses the membrane as a helical span at residues 930-950; that stretch reads VYGKYVQAALLHLGRLTGTYI. Residues 930 to 950 form an interaction with host SCPS1 region; it reads VYGKYVQAALLHLGRLTGTYI. Topologically, residues 951 to 1658 are cytoplasmic; sequence YDHLAPMKDW…CMSADLEVIT (708 aa). Residues His-953, Glu-973, and Cys-994 each act as for protease NS2 activity; shared with dimeric partner in the active site. A Peptidase S29 domain is found at 1028–1209; it reads APITAYAQQT…ENLETTMRSP (182 aa). Active-site charge relay system; for serine protease NS3 activity residues include His-1084 and Asp-1108. The Zn(2+) site is built by Cys-1124 and Cys-1126. Ser-1166 functions as the Charge relay system; for serine protease NS3 activity in the catalytic mechanism. Cys-1172 and His-1176 together coordinate Zn(2+). In terms of domain architecture, Helicase ATP-binding spans 1218-1351; sequence PAVPHEFQVG…ARLVVLATAI (134 aa). 1231–1238 contributes to the ATP binding site; the sequence is APTGSGKS. Mg(2+)-binding residues include Ser-1238 and Glu-1318. A DECH box motif is present at residues 1317 to 1320; sequence DECH. Residues 1362–1539 enclose the Helicase C-terminal domain; that stretch reads NIEEVALPSE…DLTPAETTVR (178 aa). The interval 1487-1499 is RNA-binding; sequence QRRGRTGRGRHGI. Residues 1659–1679 traverse the membrane as a helical segment; it reads STWVLVGGVVAALAAYCLTVG. Residues 1680–1691 are NS3-binding; sequence SVAIVGRIILSG. Residues 1680–1806 lie on the Cytoplasmic side of the membrane; the sequence is SVAIVGRIIL…AVTSPLTTHQ (127 aa). Residues 1807-1827 form a helical membrane-spanning segment; sequence TLLFNILGGWVASQIAPPTAA. The Lumenal segment spans residues 1828–1829; sequence TA. The chain crosses the membrane as a helical span at residues 1830–1850; that stretch reads FVVSGMAGAAVGNIGLGRVLI. Position 1851 (Asp-1851) is a topological domain, cytoplasmic. Residues 1852–1872 form a helical membrane-spanning segment; it reads ILAGYGTGVAGALVAFKIMCG. Residues 1873–1882 are Lumenal-facing; it reads ERPTAEELVN. The chain crosses the membrane as a helical span at residues 1883–1903; the sequence is LLPSILCPGALVVGVICAAVL. The Cytoplasmic segment spans residues 1904–1973; it reads RRHIGPGEGA…WIGEDYSTPC (70 aa). Cys-1973 carries the S-palmitoyl cysteine; by host lipid modification. An intramembrane segment occupies 1974–2003; that stretch reads DGTWLRAIWDWVCTALTDFKAWLQAKLLPQ. Over 2004 to 2993 the chain is Cytoplasmic; the sequence is LPGVPFFSCQ…YHSMSRARPR (990 aa). Zn(2+) contacts are provided by Cys-2012, Cys-2030, Cys-2032, and Cys-2053. The tract at residues 2121–2209 is FKBP8-binding; sequence EFFTELDGVR…ANSSASQLSA (89 aa). The segment at 2121-2334 is transcriptional activation; that stretch reads EFFTELDGVR…VPLPRRKRKP (214 aa). The tract at residues 2136 to 2140 is interaction with non-structural protein 4A; that stretch reads PPCNP. Positions 2190-2441 are interaction with host SKP2; the sequence is RLNRGSPPSL…ALITPCSAEE (252 aa). A phosphoserine; by host mark is found at Ser-2195, Ser-2198, Ser-2202, Ser-2205, Ser-2208, and Ser-2211. The interval 2211–2250 is ISDR; that stretch reads SLKATCTIQGHHPDADLIKANLLWRQCMGGNITRVEAENK. An interaction with EIF2AK2/PKR region spans residues 2211-2276; that stretch reads SLKATCTIQG…REISVSADCF (66 aa). Residues 2250–2307 are NS4B-binding; that stretch reads KVEILDCFKPLKEEEDDREISVSADCFKKGPAFPPALPVWARPGYDPPLLETWKRPDY. The tract at residues 2300 to 2378 is V3; sequence ETWKRPDYDP…GTSSQHDSGP (79 aa). Disordered regions lie at residues 2315–2342 and 2359–2412; these read CPIP…DSTV and PSIE…GSWS. Pro residues predominate over residues 2316–2327; the sequence is PIPPAGPPPVPL. Residues 2323 to 2326 carry the SH3-binding motif; it reads PPVP. Residues 2328-2337 carry the Nuclear localization signal motif; the sequence is PRRKRKPMEL. Residues 2361-2375 are compositionally biased toward polar residues; that stretch reads IEGQDSALGTSSQHD. A compositionally biased stretch (basic and acidic residues) spans 2376 to 2385; sequence SGPEEKRDDN. Residue Ser-2465 is modified to Phosphoserine; by host. The 119-residue stretch at 2637 to 2755 folds into the RdRp catalytic domain; the sequence is PMAFSYDTRC…ICESQGTHED (119 aa). Residues Asp-2643, Asp-2741, and Asp-2742 each coordinate Mg(2+). The chain crosses the membrane as a helical span at residues 2994–3014; the sequence is NLLLCLLLLSVGVGIFLLPAR.

This sequence belongs to the hepacivirus polyprotein family. In terms of assembly, homooligomer. Interacts with E1 (via C-terminus). Interacts with the non-structural protein 5A. Interacts (via N-terminus) with host STAT1 (via SH2 domain); this interaction results in decreased STAT1 phosphorylation and ubiquitin-mediated proteasome-dependent STAT1 degradation, leading to decreased IFN-stimulated gene transcription. Interacts with host STAT3; this interaction constitutively activates STAT3. Interacts with host LTBR receptor. Interacts with host TNFRSF1A receptor and possibly induces apoptosis. Interacts with host HNRPK. Interacts with host YWHAE. Interacts with host UBE3A/E6AP. Interacts with host DDX3X. Interacts with host APOA2. Interacts with host RXRA protein. Interacts with host SP110 isoform 3/Sp110b; this interaction sequesters the transcriptional corepressor SP110 away from the nucleus. Interacts with host CREB3 nuclear transcription protein; this interaction triggers cell transformation. Interacts with host ACY3. Interacts with host C1QR1. Interacts with host RBM24; this interaction, which enhances the interaction of the mature core protein with 5'-UTR, may inhibit viral translation and favor replication. Interacts with host EIF2AK2/PKR; this interaction induces the autophosphorylation of EIF2AK2. Part of the viral assembly initiation complex composed of NS2, E1, E2, NS3, NS4A, NS5A and the mature core protein. As to quaternary structure, forms a heterodimer with envelope glycoprotein E2. Interacts with mature core protein. Interacts with protease NS2. The heterodimer E1/E2 interacts with host CLDN1; this interaction plays a role in viral entry into host cell. Interacts with host SPSB2 (via C-terminus). Part of the viral assembly initiation complex composed of NS2, E1, E2, NS3, NS4A, NS5A and the mature core protein. Interacts with host NEURL3; this interaction prevents E1 binding to glycoprotein E2. Forms a heterodimer with envelope glycoprotein E1. Interacts with host CD81 and SCARB1 receptors; these interactions play a role in viral entry into host cell. Interacts with host EIF2AK2/PKR; this interaction inhibits EIF2AK2 and probably allows the virus to evade the innate immune response. Interacts with host CD209/DC-SIGN and CLEC4M/DC-SIGNR. Interact with host SPCS1; this interaction is essential for viral particle assembly. Interacts with protease NS2. The heterodimer E1/E2 interacts with host CLDN1; this interaction plays a role in viral entry into host cell. Part of the viral assembly initiation complex composed of NS2, E1, E2, NS3, NS4A, NS5A and the mature core protein. Interacts with host SLC3A2/4F2hc; the interaction may facilitate viral entry into host cell. Interacts with human PLSCR1. In terms of assembly, homohexamer. Homoheptamer. Interacts with protease NS2. As to quaternary structure, homodimer. Interacts with host SPCS1; this interaction is essential for viral particle assembly. Interacts with envelope glycoprotein E1. Interacts with envelope glycoprotein E2. Interacts with viroporin p7. Interacts with serine protease/helicase NS3. Part of the replication complex composed of NS2, NS3, NS4A, NS4B, NS5A and the RNA-directed RNA polymerase embedded in an ER-derived membranous web. Part of the viral assembly initiation complex composed of NS2, E1, E2, NS3, NS4A, NS5A and the mature core protein. Interacts with protease NS2. Interacts with non-structural protein 4A; this interaction stabilizes the folding of NS3 serine protease. NS3-NS4A interaction is essential for NS3 activation and allows membrane anchorage of the latter. NS3/NS4A complex also prevents phosphorylation of host IRF3, thus preventing the establishment of dsRNA induced antiviral state. Interacts with host MAVS; this interaction leads to the cleavage and inhibition of host MAVS. Interacts with host TICAM1; this interaction leads to the cleavage and inhibition of host TICAM1. Interacts with host TANK-binding kinase/TBK1; this interaction results in the inhibition of the association between TBK1 and IRF3, which leads to the inhibition of IRF3 activation. Interacts with host RBM24. Part of the replication complex composed of NS2, NS3, NS4A, NS4B, NS5A and the RNA-directed RNA polymerase embedded in an ER-derived membranous web. Part of the viral assembly initiation complex composed of NS2, E1, E2, NS3, NS4A, NS5A and the mature core protein. In terms of assembly, interacts with NS3 serine protease; this interaction stabilizes the folding of NS3 serine protease. NS3-NS4A interaction is essential for NS3 activation and allows membrane anchorage of the latter. Interacts with non-structural protein 5A (via N-terminus). Part of the replication complex composed of NS2, NS3, NS4A, NS4B, NS5A and the RNA-directed RNA polymerase embedded in an ER-derived membranous web. Part of the viral assembly initiation complex composed of NS2, E1, E2, NS3, NS4A, NS5A and the mature core protein. As to quaternary structure, homomultimer. Interacts with non-structural protein NS5A. Interacts with host PLA2G4C; this interaction likely initiates the recruitment of replication complexes to lipid droplets. Interacts with host STING; this interaction disrupts the interaction between STING and TBK1 thereby suppressing the interferon signaling. Part of the replication complex composed of NS2, NS3, NS4A, NS4B, NS5A and the RNA-directed RNA polymerase embedded in an ER-derived membranous web. Monomer. Homodimer; dimerization is required for RNA-binding. Interacts with the mature core protein. Interacts (via N-terminus) with non-structural protein 4A. Interacts with non-structural protein 4B. Interacts (via region D2) with RNA-directed RNA polymerase. Part of the viral assembly initiation complex composed of NS2, E1, E2, NS3, NS4A, NS5A and the mature core protein. Part of the replication complex composed of NS2, NS3, NS4A, NS4B, NS5A and the RNA-directed RNA polymerase embedded in an ER-derived membranous web. Interacts with host GRB2. Interacts with host BIN1. Interacts with host PIK3R1. Interacts with host SRCAP. Interacts with host FKBP8. Interacts (via C-terminus) with host VAPB (via MSP domain). Interacts with host EIF2AK2/PKR; this interaction leads to disruption of EIF2AK2 dimerization by NS5A and probably allows the virus to evade the innate immune response. Interacts (via N-terminus) with host PACSIN2 (via N-terminus); this interaction attenuates protein kinase C alpha-mediated phosphorylation of PACSIN2 by disrupting the interaction between PACSIN2 and PRKCA. Interacts (via N-terminus) with host SRC kinase (via SH2 domain). Interacts with most Src-family kinases. Interacts with host IFI27 and SKP2; promotes the ubiquitin-mediated proteasomal degradation of NS5A. Interacts with host GPS2. Interacts with host TNFRSF21; this interaction allows the modulation by the virus of JNK, p38 MAPK, STAT3, and Akt signaling pathways in a DR6-dependent manner. Interacts (via N-terminus) with host CIDEB (via N-terminus); this interaction seems to regulate the association of HCV particles with APOE. Interacts with host CHKA/Choline Kinase-alpha; CHKA bridges host PI4KA and NS5A and potentiates NS5A-stimulated PI4KA activity, which then facilitates the targeting of the ternary complex to the ER for viral replication. Interacts with host SPSB2 (via C-terminus); this interaction targets NS5A for ubiquitination and degradation. Interacts with host RAB18; this interaction may promote the association of NS5A and other replicase components with lipid droplets. Interacts (via region D2) with host PPIA/CYPA; the interaction stimulates RNA-binding ability of NS5A and is dependent on the peptidyl-prolyl cis-trans isomerase activity of PPIA/CYPA. Interacts with host TRIM14; this interaction induces the degradation of NS5A. In terms of assembly, homooligomer. Interacts with non-structural protein 5A. Interacts with host VAPB. Interacts with host PRK2/PKN2. Interacts with host HNRNPA1 and SEPT6; these interactions facilitate viral replication. Part of the replication complex composed of NS2, NS3, NS4A, NS4B, NS5A and the RNA-directed RNA polymerase. Zn(2+) serves as cofactor. It depends on Mg(2+) as a cofactor. In terms of processing, specific enzymatic cleavages in vivo yield mature proteins. The structural proteins, core, E1, E2 and p7 are produced by proteolytic processing by host signal peptidases. The core protein precursor is synthesized as a 23 kDa, which is retained in the ER membrane through the hydrophobic signal peptide. Cleavage by the signal peptidase releases the 21 kDa mature core protein. The cleavage of the core protein precursor occurs between aminoacids 176 and 188 but the exact cleavage site is not known. Some degraded forms of the core protein appear as well during the course of infection. The other proteins (p7, NS2, NS3, NS4A, NS4B, NS5A and NS5B) are cleaved by the viral proteases. Autoprocessing between NS2 and NS3 is mediated by the NS2 cysteine protease catalytic domain and regulated by the NS3 N-terminal domain. Post-translationally, phosphorylated by host PKC and PKA. Ubiquitinated; mediated by UBE3A and leading to core protein subsequent proteasomal degradation. In terms of processing, highly N-glycosylated. Post-translationally, palmitoylation is required for NS2/3 autoprocessing and E2 recruitment to membranes. Palmitoylated. This modification may play a role in its polymerization or in protein-protein interactions. In terms of processing, phosphorylated on serines in a basal form termed p56. p58 is a hyperphosphorylated form of p56. p56 and p58 coexist in the cell in roughly equivalent amounts. Hyperphosphorylation is dependent on the presence of NS4A. Host CSNK1A1/CKI-alpha or RPS6KB1 kinases may be responsible for NS5A phosphorylation. Post-translationally, tyrosine phosphorylation is essential for the interaction with host SRC. The N-terminus is phosphorylated by host PRK2/PKN2.

The protein resides in the host endoplasmic reticulum membrane. It is found in the host mitochondrion membrane. Its subcellular location is the virion. It localises to the host cytoplasm. The protein localises to the host nucleus. The protein resides in the host lipid droplet. It is found in the virion membrane. Its subcellular location is the host mitochondrion. It localises to the host cell membrane. The protein localises to the host perinuclear region. The catalysed reaction is Hydrolysis of four peptide bonds in the viral precursor polyprotein, commonly with Asp or Glu in the P6 position, Cys or Thr in P1 and Ser or Ala in P1'.. The enzyme catalyses a ribonucleoside 5'-triphosphate + H2O = a ribonucleoside 5'-diphosphate + phosphate + H(+). It catalyses the reaction ATP + H2O = ADP + phosphate + H(+). It carries out the reaction RNA(n) + a ribonucleoside 5'-triphosphate = RNA(n+1) + diphosphate. Its activity is regulated as follows. Inhibited by the antiviral drug hexamethylene amiloride. Inhibition by amantadine appears to be genotype-dependent. Also inhibited by long-alkyl-chain iminosugar derivatives. Activity is up-regulated by PRK2/PKN2-mediated phosphorylation. Functionally, packages viral RNA to form a viral nucleocapsid, and promotes virion budding. Participates in the viral particle production as a result of its interaction with the non-structural protein 5A. Binds RNA and may function as a RNA chaperone to induce the RNA structural rearrangements taking place during virus replication. Modulates viral translation initiation by interacting with viral IRES and 40S ribosomal subunit. Affects various cell signaling pathways, host immunity and lipid metabolism. Prevents the establishment of cellular antiviral state by blocking the interferon-alpha/beta (IFN-alpha/beta) and IFN-gamma signaling pathways and by blocking the formation of phosphorylated STAT1 and promoting ubiquitin-mediated proteasome-dependent degradation of STAT1. Activates STAT3 leading to cellular transformation. Regulates the activity of cellular genes, including c-myc and c-fos. May repress the promoter of p53, and sequester CREB3 and SP110 isoform 3/Sp110b in the cytoplasm. Represses cell cycle negative regulating factor CDKN1A, thereby interrupting an important check point of normal cell cycle regulation. Targets transcription factors involved in the regulation of inflammatory responses and in the immune response: suppresses TNF-induced NF-kappa-B activation, and activates AP-1. Binds to dendritic cells (DCs) via C1QR1, resulting in down-regulation of T-lymphocytes proliferation. Alters lipid metabolism by interacting with hepatocellular proteins involved in lipid accumulation and storage. Induces up-regulation of FAS promoter activity, and thereby contributes to the increased triglyceride accumulation in hepatocytes (steatosis). In terms of biological role, forms a heterodimer with envelope glycoprotein E2, which mediates virus attachment to the host cell, virion internalization through clathrin-dependent endocytosis and fusion with host membrane. Fusion with the host cell is most likely mediated by both E1 and E2, through conformational rearrangements of the heterodimer required for fusion rather than a classical class II fusion mechanism. E1/E2 heterodimer binds host apolipoproteins such as APOB and ApoE thereby forming a lipo-viro-particle (LVP). APOE associated to the LVP allows the initial virus attachment to cell surface receptors such as the heparan sulfate proteoglycans (HSPGs), syndecan-1 (SDC1), syndecan-1 (SDC2), the low-density lipoprotein receptor (LDLR) and scavenger receptor class B type I (SCARB1). The cholesterol transfer activity of SCARB1 allows E2 exposure and binding of E2 to SCARB1 and the tetraspanin CD81. E1/E2 heterodimer binding on CD81 activates the epithelial growth factor receptor (EGFR) signaling pathway. Diffusion of the complex E1-E2-EGFR-SCARB1-CD81 to the cell lateral membrane allows further interaction with Claudin 1 (CLDN1) and occludin (OCLN) to finally trigger HCV entry. Forms a heterodimer with envelope glycoprotein E1, which mediates virus attachment to the host cell, virion internalization through clathrin-dependent endocytosis and fusion with host membrane. Fusion with the host cell is most likely mediated by both E1 and E2, through conformational rearrangements of the heterodimer required for fusion rather than a classical class II fusion mechanism. The interaction between envelope glycoprotein E2 and host apolipoprotein E/APOE allows the proper assembly, maturation and infectivity of the viral particles. This interaction is probably promoted via the up-regulation of cellular autophagy by the virus. E1/E2 heterodimer binds host apolipoproteins such as APOB and APOE thereby forming a lipo-viro-particle (LVP). APOE associated to the LVP allows the initial virus attachment to cell surface receptors such as the heparan sulfate proteoglycans (HSPGs), syndecan-1 (SDC1), syndecan-1 (SDC2), the low-density lipoprotein receptor (LDLR) and scavenger receptor class B type I (SCARB1). The cholesterol transfer activity of SCARB1 allows E2 exposure and binding of E2 to SCARB1 and the tetraspanin CD81. E1/E2 heterodimer binding on CD81 activates the epithelial growth factor receptor (EGFR) signaling pathway. Diffusion of the complex E1-E2-EGFR-SCARB1-CD81 to the cell lateral membrane allows further interaction with Claudin 1 (CLDN1) and occludin (OCLN) to finally trigger HCV entry. Inhibits host EIF2AK2/PKR activation, preventing the establishment of an antiviral state. Viral ligand for CD209/DC-SIGN and CLEC4M/DC-SIGNR, which are respectively found on dendritic cells (DCs), and on liver sinusoidal endothelial cells and macrophage-like cells of lymph node sinuses. These interactions allow the capture of circulating HCV particles by these cells and subsequent facilitated transmission to permissive cells such as hepatocytes and lymphocyte subpopulations. The interaction between E2 and host amino acid transporter complex formed by SLC3A2 and SLC7A5/LAT1 may facilitate viral entry into host cell. Its function is as follows. Ion channel protein that acts as a viroporin and plays an essential role in the assembly, envelopment and secretion of viral particles. Regulates the host cell secretory pathway, which induces the intracellular retention of viral glycoproteins and favors assembly of viral particles. Creates a pore in acidic organelles and releases Ca(2+) and H(+) in the cytoplasm of infected cells, leading to a productive viral infection. High levels of cytoplasmic Ca(2+) may trigger membrane trafficking and transport of viral ER-associated proteins to viroplasms, sites of viral genome replication. This ionic imbalance induces the assembly of the inflammasome complex, which triggers the maturation of pro-IL-1beta into IL-1beta through the action of caspase-1. Targets also host mitochondria and induces mitochondrial depolarization. In addition of its role as a viroporin, acts as a lipid raft adhesion factor. Functionally, cysteine protease required for the proteolytic auto-cleavage between the non-structural proteins NS2 and NS3. The N-terminus of NS3 is required for the function of NS2 protease (active region NS2-3). Promotes the initiation of viral particle assembly by mediating the interaction between structural and non-structural proteins. In terms of biological role, displays three enzymatic activities: serine protease with a chymotrypsin-like fold, NTPase and RNA helicase. NS3 serine protease, in association with NS4A, is responsible for the cleavages of NS3-NS4A, NS4A-NS4B, NS4B-NS5A and NS5A-NS5B. The NS3/NS4A complex prevents phosphorylation of host IRF3, thus preventing the establishment of dsRNA induced antiviral state. The NS3/NS4A complex induces host amino acid transporter component SLC3A2, thus contributing to HCV propagation. NS3 RNA helicase binds to RNA and unwinds both dsDNA and dsRNA in the 3' to 5' direction, and likely resolves RNA complicated stable secondary structures in the template strand. Binds a single ATP and catalyzes the unzipping of a single base pair of dsRNA. Inhibits host antiviral proteins TBK1 and IRF3 thereby preventing the establishment of an antiviral state. Cleaves host MAVS/CARDIF thereby preventing the establishment of an antiviral state. Cleaves host TICAM1/TRIF, thereby disrupting TLR3 signaling and preventing the establishment of an antiviral state. Induces a specific membrane alteration that serves as a scaffold for the virus replication complex. This membrane alteration gives rise to the so-called ER-derived membranous web that contains the replication complex. NS4B self-interaction contributes to its function in membranous web formation. Promotes host TRIF protein degradation in a CASP8-dependent manner thereby inhibiting host TLR3-mediated interferon signaling. Disrupts the interaction between STING and TBK1 contributing to the inhibition of interferon signaling. Its function is as follows. Phosphorylated protein that is indispensable for viral replication and assembly. Both hypo- and hyperphosphorylated states are required for the viral life cycle. The hyperphosphorylated form of NS5A is an inhibitor of viral replication. Involved in RNA-binding and especially in binding to the viral genome. Zinc is essential for RNA-binding. Participates in the viral particle production as a result of its interaction with the mature viral core protein. Its interaction with host VAPB may target the viral replication complex to vesicles. Down-regulates viral IRES translation initiation. Mediates interferon resistance, presumably by interacting with and inhibiting host EIF2AK2/PKR. Prevents BIN1-induced apoptosis. Acts as a transcriptional activator of some host genes important for viral replication when localized in the nucleus. Via the interaction with host PACSIN2, modulates lipid droplet formation in order to promote virion assembly. Modulates TNFRSF21/DR6 signaling pathway for viral propagation. Functionally, RNA-dependent RNA polymerase that performs primer-template recognition and RNA synthesis during viral replication. Initiates RNA transcription/replication at a flavin adenine dinucleotide (FAD), resulting in a 5'- FAD cap on viral RNAs. In this way, recognition of viral 5' RNA by host pattern recognition receptors can be bypassed, thereby evading activation of antiviral pathways. The protein is Genome polyprotein of Hepatitis C virus genotype 5a (isolate EUH1480) (HCV).